The primary structure comprises 259 residues: Haloacid dehalogenase-like hydrolase domain-containing protein 2 (259 aa).

Residues Asp-13 and Ser-15 each coordinate Mg(2+). Substrate-binding positions include 13 to 15 and 46 to 47; these read DLS and TN. Positions 47–71 form a coiled coil; the sequence is NTTKESKQDLLERLRKLEFDISEDE. Lys-50 is subject to N6-succinyllysine. Lys-179 contributes to the substrate binding site. Mg(2+) is bound at residue Asp-204.

It belongs to the HAD-like hydrolase superfamily. Mg(2+) is required as a cofactor.

This chain is Haloacid dehalogenase-like hydrolase domain-containing protein 2 (HDHD2), found in Homo sapiens (Human).